A 122-amino-acid polypeptide reads, in one-letter code: Small ribosomal subunit protein uS12 (122 aa).

This sequence belongs to the universal ribosomal protein uS12 family. In terms of assembly, part of the 30S ribosomal subunit. Contacts proteins S8 and S17. May interact with IF1 in the 30S initiation complex.

With S4 and S5 plays an important role in translational accuracy. Functionally, interacts with and stabilizes bases of the 16S rRNA that are involved in tRNA selection in the A site and with the mRNA backbone. Located at the interface of the 30S and 50S subunits, it traverses the body of the 30S subunit contacting proteins on the other side and probably holding the rRNA structure together. The combined cluster of proteins S8, S12 and S17 appears to hold together the shoulder and platform of the 30S subunit. The polypeptide is Small ribosomal subunit protein uS12 (Corynebacterium efficiens (strain DSM 44549 / YS-314 / AJ 12310 / JCM 11189 / NBRC 100395)).